The primary structure comprises 300 residues: N-acetylmuramic acid 6-phosphate etherase (300 aa).

The SIS domain maps to 57–220 (IAVAFQSGGR…TTGAMIRTGK (164 aa)). Glu85 (proton donor) is an active-site residue. The active site involves Glu116.

Belongs to the GCKR-like family. MurNAc-6-P etherase subfamily. As to quaternary structure, homodimer.

It catalyses the reaction N-acetyl-D-muramate 6-phosphate + H2O = N-acetyl-D-glucosamine 6-phosphate + (R)-lactate. It participates in amino-sugar metabolism; 1,6-anhydro-N-acetylmuramate degradation. The protein operates within amino-sugar metabolism; N-acetylmuramate degradation. Its pathway is cell wall biogenesis; peptidoglycan recycling. Specifically catalyzes the cleavage of the D-lactyl ether substituent of MurNAc 6-phosphate, producing GlcNAc 6-phosphate and D-lactate. Together with AnmK, is also required for the utilization of anhydro-N-acetylmuramic acid (anhMurNAc) either imported from the medium or derived from its own cell wall murein, and thus plays a role in cell wall recycling. This is N-acetylmuramic acid 6-phosphate etherase from Aliivibrio fischeri (strain ATCC 700601 / ES114) (Vibrio fischeri).